The following is a 548-amino-acid chain: Chaperonin GroEL (548 aa).

Residues 30-33 (TLGP), K51, 87-91 (DGTTT), G415, and 479-481 (NAV) each bind ATP.

Belongs to the chaperonin (HSP60) family. Forms a cylinder of 14 subunits composed of two heptameric rings stacked back-to-back. Interacts with the co-chaperonin GroES.

Its subcellular location is the cytoplasm. It catalyses the reaction ATP + H2O + a folded polypeptide = ADP + phosphate + an unfolded polypeptide.. Functionally, together with its co-chaperonin GroES, plays an essential role in assisting protein folding. The GroEL-GroES system forms a nano-cage that allows encapsulation of the non-native substrate proteins and provides a physical environment optimized to promote and accelerate protein folding. This Stenotrophomonas maltophilia (Pseudomonas maltophilia) protein is Chaperonin GroEL.